Reading from the N-terminus, the 423-residue chain is UDP-N-acetylglucosamine 1-carboxyvinyltransferase (423 aa).

K22–N23 lines the phosphoenolpyruvate pocket. Position 93 (R93) interacts with UDP-N-acetyl-alpha-D-glucosamine. The active-site Proton donor is the C117. C117 is modified (2-(S-cysteinyl)pyruvic acid O-phosphothioketal). UDP-N-acetyl-alpha-D-glucosamine is bound by residues R122–L126, D307, and V329.

Belongs to the EPSP synthase family. MurA subfamily.

The protein localises to the cytoplasm. It carries out the reaction phosphoenolpyruvate + UDP-N-acetyl-alpha-D-glucosamine = UDP-N-acetyl-3-O-(1-carboxyvinyl)-alpha-D-glucosamine + phosphate. Its pathway is cell wall biogenesis; peptidoglycan biosynthesis. Its function is as follows. Cell wall formation. Adds enolpyruvyl to UDP-N-acetylglucosamine. This chain is UDP-N-acetylglucosamine 1-carboxyvinyltransferase, found in Chlorobium chlorochromatii (strain CaD3).